The primary structure comprises 218 residues: NAD(P)H-quinone oxidoreductase subunit I (218 aa).

4Fe-4S ferredoxin-type domains lie at 55–84 (GRIH…VDWV) and 95–124 (RNYS…MTEE). 8 residues coordinate [4Fe-4S] cluster: Cys-64, Cys-67, Cys-70, Cys-74, Cys-104, Cys-107, Cys-110, and Cys-114. The disordered stretch occupies residues 168 to 218 (EVQPHGVDPSRPRAGQRPDQVLSSLKQNAGGSAGNEGESATSTNTSKGSAE). Residues 208–218 (TSTNTSKGSAE) show a composition bias toward polar residues.

The protein belongs to the complex I 23 kDa subunit family. As to quaternary structure, NDH-1 is composed of at least 11 different subunits. The cofactor is [4Fe-4S] cluster.

Its subcellular location is the cellular thylakoid membrane. It carries out the reaction a plastoquinone + NADH + (n+1) H(+)(in) = a plastoquinol + NAD(+) + n H(+)(out). The enzyme catalyses a plastoquinone + NADPH + (n+1) H(+)(in) = a plastoquinol + NADP(+) + n H(+)(out). Functionally, NDH-1 shuttles electrons from an unknown electron donor, via FMN and iron-sulfur (Fe-S) centers, to quinones in the respiratory and/or the photosynthetic chain. The immediate electron acceptor for the enzyme in this species is believed to be plastoquinone. Couples the redox reaction to proton translocation, and thus conserves the redox energy in a proton gradient. The chain is NAD(P)H-quinone oxidoreductase subunit I from Synechococcus sp. (strain WH7803).